The chain runs to 956 residues: Glutamate receptor ionotropic, kainate 4 (956 aa).

Residues 1-20 (MPRVSAPLVLLPAWLLMVAC) form the signal peptide. Residues 21 to 545 (SPHSLRIAAI…YFSSLDPFSP (525 aa)) lie on the Extracellular side of the membrane. N-linked (GlcNAc...) asparagine glycans are attached at residues N158, N220, N272, N286, N323, N408, N415, and N479. The L-glutamate site is built by G500, T502, and R507. The chain crosses the membrane as a helical span at residues 546-566 (GVWLFMLLAYLAVSCVLFLVA). At 567–623 (RLTPYEWYSPHPCAQGRCNLLVNQYSLGNSLWFPVGGFMQQGSTIAPRALSTRCVSG) the chain is on the cytoplasmic side. A helical transmembrane segment spans residues 624-644 (VWWAFTLIIISSYTANLAAFL). The Extracellular segment spans residues 645 to 804 (TVQRMEVPIE…HRAKGLGMEN (160 aa)). Residues S674, S675, and E723 each contribute to the L-glutamate site. The N-linked (GlcNAc...) asparagine glycan is linked to N736. The helical transmembrane segment at 805–825 (IGGIFVVLICGLIVAIFMAML) threads the bilayer. Residues 826–956 (EFLWTLRHSE…DKTTNSSEPE (131 aa)) are Cytoplasmic-facing. The tract at residues 931–956 (LRARPSPARSEESLEWDKTTNSSEPE) is disordered. The span at 939–948 (RSEESLEWDK) shows a compositional bias: basic and acidic residues.

The protein belongs to the glutamate-gated ion channel (TC 1.A.10.1) family. GRIK4 subfamily. Homodimer. Can form functional heteromeric receptors with GRIK1, GRIK2 and GRIK3. As to expression, strong expression in hippocampal CA3 pyramidal cells. Low expression in hippocampal dentate granule cells, in layers II, V and VI of the cortex, and in cerebellar Purkinje cells. No expression in the striatum, reticular thalamus, hypothalamus or amygdaloid complex.

It is found in the cell membrane. The protein resides in the postsynaptic cell membrane. It localises to the presynaptic cell membrane. Ionotropic glutamate receptor that functions as a cation-permeable ligand-gated ion channel, gated by L-glutamate and the glutamatergic agonist kainic acid. Cannot form functional channels on its own and shows channel activity only in heteromeric assembly with GRIK1, GRIK2 and GRIK3 subunits. The polypeptide is Glutamate receptor ionotropic, kainate 4 (Grik4) (Rattus norvegicus (Rat)).